We begin with the raw amino-acid sequence, 102 residues long: Class I hydrophobin 1 (102 aa).

The N-terminal stretch at 1–18 is a signal peptide; that stretch reads MSLFKILVAAATVATALA. 4 disulfides stabilise this stretch: Cys37–Cys84, Cys45–Cys78, Cys46–Cys63, and Cys85–Cys97.

The protein belongs to the fungal hydrophobin family.

It localises to the secreted. The protein localises to the cell wall. Functionally, aerial growth, conidiation, and dispersal of filamentous fungi in the environment rely upon a capability of their secreting small amphipathic proteins called hydrophobins (HPBs) with low sequence identity. Class I can self-assemble into an outermost layer of rodlet bundles on aerial cell surfaces, conferring cellular hydrophobicity that supports fungal growth, development and dispersal; whereas Class II form highly ordered films at water-air interfaces through intermolecular interactions but contribute nothing to the rodlet structure. Hyd1 is essential for stress tolerance, conidial hydrophobicity, adhesion to insect cuticle, and insect infectivity/pathogenicity. Plays a neglectable role in hyphal growth and asexual development. This chain is Class I hydrophobin 1, found in Metarhizium robertsii (strain ARSEF 23 / ATCC MYA-3075) (Metarhizium anisopliae (strain ARSEF 23)).